Here is a 101-residue protein sequence, read N- to C-terminus: Integration host factor subunit beta (101 aa).

Belongs to the bacterial histone-like protein family. As to quaternary structure, heterodimer of an alpha and a beta chain.

Functionally, this protein is one of the two subunits of integration host factor, a specific DNA-binding protein that functions in genetic recombination as well as in transcriptional and translational control. The protein is Integration host factor subunit beta of Nitrobacter hamburgensis (strain DSM 10229 / NCIMB 13809 / X14).